We begin with the raw amino-acid sequence, 594 residues long: MASEHIEHKLALLPDKPGCYQMKNLNSQIIYVGKAKNLKNRVRSYFKSSHEGKTAKLVSEIADFDYIVTSSDKEAFLLEITLIQKFQPYYNIKLKKGTGYPYIKITNEKDPRMEIVSSVRRDGGFYFGPYPNVYAAEETLHFLEKVYPLRRCNGFQGRPCLYYHMGQCLGACFQEVPKEEYDQQIAKIKSFLRGNVAKIKQSLQTKMQKASEAMEFERAADIRDQIHYIEVTVEKQKIISNDSTPRDLFNFYLDKGWLSIQIFFIRQSRLIKREKRLFPIATDVNDELSSFILQFYNNKNKVLPNEILVPSGLDNKIMAEILGVPVRTPQRGEKKNLLELAKENAQITLEEKFRLMELDESKTTGAMKEITDALGIPEGHRIEAFDHSHIQGSELVSAMVVFTDGKPDKKMYRKFKLNTVDHADEAASTREVIRRRYVRLLKEKQSLPDLILMDGGDIQLNAAKDVLVNELSLHIPVAGMVKNDKHKTSDLIFGSQDQRVQLDPKSQGFYLVQRIQDEVHRFAITFHRQLHAKNSLASQLDLIQGVGPKTRNKLLKSFGSLNKIRDANLKEIEELGIPEKVAKTIKVSLSVHGK.

A GIY-YIG domain is found at 15 to 92 (DKPGCYQMKN…IQKFQPYYNI (78 aa)). The 36-residue stretch at 197 to 232 (AKIKQSLQTKMQKASEAMEFERAADIRDQIHYIEVT) folds into the UVR domain.

The protein belongs to the UvrC family. As to quaternary structure, interacts with UvrB in an incision complex.

The protein resides in the cytoplasm. Functionally, the UvrABC repair system catalyzes the recognition and processing of DNA lesions. UvrC both incises the 5' and 3' sides of the lesion. The N-terminal half is responsible for the 3' incision and the C-terminal half is responsible for the 5' incision. The chain is UvrABC system protein C from Pediococcus pentosaceus (strain ATCC 25745 / CCUG 21536 / LMG 10740 / 183-1w).